The sequence spans 307 residues: GTPase Era (307 aa).

The 175-residue stretch at 7-181 folds into the Era-type G domain; sequence RCGWVALMGP…VELIRKKLPK (175 aa). Residues 15 to 22 are G1; sequence GPPNAGKS. 15 to 22 provides a ligand contact to GTP; sequence GPPNAGKS. Positions 41-45 are G2; sequence QTTRN. The G3 stretch occupies residues 62-65; sequence DTPG. Residues 62–66 and 130–133 contribute to the GTP site; these read DTPGL and NKVD. The G4 stretch occupies residues 130–133; sequence NKVD. The tract at residues 160 to 162 is G5; that stretch reads ISA. The region spanning 212 to 290 is the KH type-2 domain; it reads LRQEVPYSVA…HLELWVKVRE (79 aa).

This sequence belongs to the TRAFAC class TrmE-Era-EngA-EngB-Septin-like GTPase superfamily. Era GTPase family. As to quaternary structure, monomer.

The protein resides in the cytoplasm. It is found in the cell inner membrane. In terms of biological role, an essential GTPase that binds both GDP and GTP, with rapid nucleotide exchange. Plays a role in 16S rRNA processing and 30S ribosomal subunit biogenesis and possibly also in cell cycle regulation and energy metabolism. This is GTPase Era from Desulfovibrio desulfuricans (strain ATCC 27774 / DSM 6949 / MB).